The chain runs to 371 residues: Probable dual-specificity RNA methyltransferase RlmN (371 aa).

E113 functions as the Proton acceptor in the catalytic mechanism. One can recognise a Radical SAM core domain in the interval 119–352 (QSWGNSVCVT…TTVRREMGGE (234 aa)). Cysteines 126 and 357 form a disulfide. C133, C137, and C140 together coordinate [4Fe-4S] cluster. S-adenosyl-L-methionine-binding positions include 182–183 (GE), S214, 237–239 (SLH), and N313. Residue C357 is the S-methylcysteine intermediate of the active site.

This sequence belongs to the radical SAM superfamily. RlmN family. [4Fe-4S] cluster serves as cofactor.

It localises to the cytoplasm. It catalyses the reaction adenosine(2503) in 23S rRNA + 2 reduced [2Fe-2S]-[ferredoxin] + 2 S-adenosyl-L-methionine = 2-methyladenosine(2503) in 23S rRNA + 5'-deoxyadenosine + L-methionine + 2 oxidized [2Fe-2S]-[ferredoxin] + S-adenosyl-L-homocysteine. The enzyme catalyses adenosine(37) in tRNA + 2 reduced [2Fe-2S]-[ferredoxin] + 2 S-adenosyl-L-methionine = 2-methyladenosine(37) in tRNA + 5'-deoxyadenosine + L-methionine + 2 oxidized [2Fe-2S]-[ferredoxin] + S-adenosyl-L-homocysteine. Functionally, specifically methylates position 2 of adenine 2503 in 23S rRNA and position 2 of adenine 37 in tRNAs. The protein is Probable dual-specificity RNA methyltransferase RlmN of Symbiobacterium thermophilum (strain DSM 24528 / JCM 14929 / IAM 14863 / T).